The sequence spans 159 residues: MGDYYVSDAPSTVNLADQINQHLSPVQSVQPVQPIQTQYNPNVLTSQQLAQIQNNPMYHYNDSRFTFDFQEILKRAIKYLIEGLAVAFVAYYFIGKGKLNIKDIVMLGITAACVFAILDVFSPTVALGARFGAGFGIGTSLFGLNPAVIGGPSLVAPIL.

The next 3 helical transmembrane spans lie at 76–96 (AIKYLIEGLAVAFVAYYFIGK), 104–124 (IVMLGITAACVFAILDVFSPT), and 131–151 (FGAGFGIGTSLFGLNPAVIGG).

It localises to the membrane. This is an uncharacterized protein from Acanthamoeba polyphaga (Amoeba).